The sequence spans 378 residues: 3-dehydroquinate synthase (378 aa).

NAD(+) contacts are provided by residues 111–115, 135–136, lysine 148, and lysine 157; these read GVIGD and TS. Positions 190, 252, and 271 each coordinate Zn(2+).

Belongs to the sugar phosphate cyclases superfamily. Dehydroquinate synthase family. It depends on NAD(+) as a cofactor. Co(2+) serves as cofactor. Requires Zn(2+) as cofactor.

The protein localises to the cytoplasm. The enzyme catalyses 7-phospho-2-dehydro-3-deoxy-D-arabino-heptonate = 3-dehydroquinate + phosphate. The protein operates within metabolic intermediate biosynthesis; chorismate biosynthesis; chorismate from D-erythrose 4-phosphate and phosphoenolpyruvate: step 2/7. In terms of biological role, catalyzes the conversion of 3-deoxy-D-arabino-heptulosonate 7-phosphate (DAHP) to dehydroquinate (DHQ). The protein is 3-dehydroquinate synthase of Mesorhizobium japonicum (strain LMG 29417 / CECT 9101 / MAFF 303099) (Mesorhizobium loti (strain MAFF 303099)).